We begin with the raw amino-acid sequence, 48 residues long: DNA-directed RNA polymerase subunit Rpo12 (48 aa).

Residues cysteine 9, cysteine 26, and cysteine 29 each coordinate Zn(2+).

Belongs to the archaeal Rpo12/eukaryotic RPC10 RNA polymerase subunit family. As to quaternary structure, part of the RNA polymerase complex. Zn(2+) is required as a cofactor.

It is found in the cytoplasm. It carries out the reaction RNA(n) + a ribonucleoside 5'-triphosphate = RNA(n+1) + diphosphate. DNA-dependent RNA polymerase (RNAP) catalyzes the transcription of DNA into RNA using the four ribonucleoside triphosphates as substrates. This chain is DNA-directed RNA polymerase subunit Rpo12, found in Saccharolobus islandicus (strain Y.N.15.51 / Yellowstone #2) (Sulfolobus islandicus).